The following is a 164-amino-acid chain: Nucleotide-binding protein EF_1165 (164 aa).

Belongs to the YajQ family.

Nucleotide-binding protein. The chain is Nucleotide-binding protein EF_1165 from Enterococcus faecalis (strain ATCC 700802 / V583).